Consider the following 262-residue polypeptide: [LysW]-aminoadipate/[LysW]-glutamate kinase (262 aa).

Residues Gly35 to Gly36, Arg62, and Asn167 each bind substrate.

It belongs to the acetylglutamate kinase family. LysZ subfamily.

It is found in the cytoplasm. It catalyses the reaction [amino-group carrier protein]-C-terminal-N-(1,4-dicarboxybutan-1-yl)-L-glutamine + ATP = [amino-group carrier protein]-C-terminal-N-(1-carboxy-5-phosphooxy-5-oxopentan-1-yl)-L-glutamine + ADP. The enzyme catalyses [amino-group carrier protein]-C-terminal-gamma-(L-glutamyl)-L-glutamate + ATP = [amino-group carrier protein]-C-terminal-gamma-(5-phospho-L-glutamyl)-L-glutamate + ADP. It participates in amino-acid biosynthesis; L-lysine biosynthesis via AAA pathway; L-lysine from L-alpha-aminoadipate (Thermus route): step 2/5. The protein operates within amino-acid biosynthesis; L-arginine biosynthesis. Functionally, involved in both the arginine and lysine biosynthetic pathways. Phosphorylates the LysW-bound precursors glutamate (for arginine biosynthesis), respectively alpha-aminoadipate (for lysine biosynthesis). This Metallosphaera sedula (strain ATCC 51363 / DSM 5348 / JCM 9185 / NBRC 15509 / TH2) protein is [LysW]-aminoadipate/[LysW]-glutamate kinase.